The chain runs to 201 residues: MYEYIRGQFQGISKDYVVIELNNIGYKIFTSGNTMSNMPKVGEEVLLYLEQIVREDFIGLYGFTTREELEMFKLLLSINGVGAKAALSLLSISTVNNLKYAIMMGDEKHITRAPGIGKKTAQRIILELKDKLKPDELTSEEGELIEGINDNSDYSFNINETLSALMALGYTEKEAQKALEKVDKTLSIENMIKESLKLLMR.

Residues 1–64 (MYEYIRGQFQ…EDFIGLYGFT (64 aa)) form a domain I region. The interval 65–143 (TREELEMFKL…PDELTSEEGE (79 aa)) is domain II. The tract at residues 144 to 152 (LIEGINDNS) is flexible linker. The interval 153–201 (DYSFNINETLSALMALGYTEKEAQKALEKVDKTLSIENMIKESLKLLMR) is domain III.

Belongs to the RuvA family. As to quaternary structure, homotetramer. Forms an RuvA(8)-RuvB(12)-Holliday junction (HJ) complex. HJ DNA is sandwiched between 2 RuvA tetramers; dsDNA enters through RuvA and exits via RuvB. An RuvB hexamer assembles on each DNA strand where it exits the tetramer. Each RuvB hexamer is contacted by two RuvA subunits (via domain III) on 2 adjacent RuvB subunits; this complex drives branch migration. In the full resolvosome a probable DNA-RuvA(4)-RuvB(12)-RuvC(2) complex forms which resolves the HJ.

Its subcellular location is the cytoplasm. The RuvA-RuvB-RuvC complex processes Holliday junction (HJ) DNA during genetic recombination and DNA repair, while the RuvA-RuvB complex plays an important role in the rescue of blocked DNA replication forks via replication fork reversal (RFR). RuvA specifically binds to HJ cruciform DNA, conferring on it an open structure. The RuvB hexamer acts as an ATP-dependent pump, pulling dsDNA into and through the RuvAB complex. HJ branch migration allows RuvC to scan DNA until it finds its consensus sequence, where it cleaves and resolves the cruciform DNA. This chain is Holliday junction branch migration complex subunit RuvA, found in Clostridium perfringens (strain ATCC 13124 / DSM 756 / JCM 1290 / NCIMB 6125 / NCTC 8237 / Type A).